A 716-amino-acid polypeptide reads, in one-letter code: Iron-sulfur clusters transporter atm1, mitochondrial (716 aa).

A mitochondrion-targeting transit peptide spans 1 to 18; it reads MAPSIKLSTMATSLHRAH. At 19–123 the chain is on the mitochondrial matrix side; it reads GTSALLRRPR…PKGSWGDKAR (105 aa). A disordered region spans residues 57 to 87; sequence LFAPNGSAKDESKPAVSTVPKTTGRGPSDPL. A helical membrane pass occupies residues 124 to 145; sequence VLLAIGLLVGGKVLNVQVPFYF. An ABC transmembrane type-1 domain is found at 124-414; the sequence is VLLAIGLLVG…LGSVYRELRQ (291 aa). Residues 146-168 lie on the Mitochondrial intermembrane side of the membrane; sequence REIVDSLNIDFSTTGGSVTAVAG. The chain crosses the membrane as a helical span at residues 169 to 192; that stretch reads AMILGYGAARVGAVVSQELRNAVF. The Mitochondrial matrix segment spans residues 193 to 241; the sequence is ASVAQKAIRKVARNTFEHLLNLDLSFHLSKQTGGLTRAIDRGTKGISFL. A helical membrane pass occupies residues 242-265; sequence LTSMVFHIVPTALEISMVCGILTY. A topological domain (mitochondrial intermembrane) is located at residue asparagine 266. Residues 267-287 traverse the membrane as a helical segment; sequence FGWQYAALTALTMVSYTAFTI. Residues 288–353 are Mitochondrial matrix-facing; the sequence is LTTAWRTKFR…NSIKVATSLA (66 aa). Glutathione is bound by residues 293-297 and 356-359; these read RTKFR and NSGQ. Residues 354–372 traverse the membrane as a helical segment; the sequence is FLNSGQNIIFSSALTVMMY. Over 373 to 387 the chain is Mitochondrial intermembrane; it reads MGAHGVATGQLTVGD. Residues 388-409 traverse the membrane as a helical segment; it reads LVLINQLVFQLSVPLNFLGSVY. Residue glycine 406 participates in glutathione binding. The Mitochondrial matrix segment spans residues 410–716; sequence RELRQSLLDM…KEEVGEKKEA (307 aa). The ABC transporter domain maps to 449 to 690; sequence IEFKDVTFGY…NGVYAQLWRA (242 aa). ATP-binding positions include tyrosine 458 and 482–493; that span reads GPSGCGKSTLLR. Residues 697-716 form a disordered region; that stretch reads EEGEVSKKGEKEEVGEKKEA. Residues 700–716 are compositionally biased toward basic and acidic residues; that stretch reads EVSKKGEKEEVGEKKEA.

It belongs to the ABC transporter superfamily. ABCB family. Heavy Metal importer (TC 3.A.1.210) subfamily. Homodimer.

The protein localises to the mitochondrion inner membrane. Performs an essential function in the generation of cytoplasmic iron-sulfur proteins by mediating the ATP-dependent export of Fe/S cluster precursors synthesized by egt-3 and other mitochondrial proteins. Hydrolyzes ATP. Binds glutathione and may function by transporting a glutathione-conjugated iron-sulfur compound. The polypeptide is Iron-sulfur clusters transporter atm1, mitochondrial (Neurospora crassa (strain ATCC 24698 / 74-OR23-1A / CBS 708.71 / DSM 1257 / FGSC 987)).